The sequence spans 640 residues: 1-deoxy-D-xylulose-5-phosphate synthase (640 aa).

Thiamine diphosphate-binding positions include histidine 78 and 119–121 (GHS). A Mg(2+)-binding site is contributed by aspartate 151. Residues 152-153 (GA), asparagine 180, tyrosine 289, and glutamate 371 each bind thiamine diphosphate. Residue asparagine 180 coordinates Mg(2+).

It belongs to the transketolase family. DXPS subfamily. In terms of assembly, homodimer. Mg(2+) serves as cofactor. It depends on thiamine diphosphate as a cofactor.

The enzyme catalyses D-glyceraldehyde 3-phosphate + pyruvate + H(+) = 1-deoxy-D-xylulose 5-phosphate + CO2. Its pathway is metabolic intermediate biosynthesis; 1-deoxy-D-xylulose 5-phosphate biosynthesis; 1-deoxy-D-xylulose 5-phosphate from D-glyceraldehyde 3-phosphate and pyruvate: step 1/1. Catalyzes the acyloin condensation reaction between C atoms 2 and 3 of pyruvate and glyceraldehyde 3-phosphate to yield 1-deoxy-D-xylulose-5-phosphate (DXP). The sequence is that of 1-deoxy-D-xylulose-5-phosphate synthase from Bartonella quintana (strain Toulouse) (Rochalimaea quintana).